A 364-amino-acid polypeptide reads, in one-letter code: DNA replication and repair protein RecF (364 aa).

Position 30–37 (30–37) interacts with ATP; sequence GNNAQGKT.

Belongs to the RecF family.

The protein resides in the cytoplasm. In terms of biological role, the RecF protein is involved in DNA metabolism; it is required for DNA replication and normal SOS inducibility. RecF binds preferentially to single-stranded, linear DNA. It also seems to bind ATP. The sequence is that of DNA replication and repair protein RecF from Clostridium botulinum (strain Langeland / NCTC 10281 / Type F).